Here is a 146-residue protein sequence, read N- to C-terminus: Acidic phospholipase A2 2 (146 aa).

Positions 1 to 21 (MTPAHLLILAAVCVSPLGASS) are cleaved as a signal peptide. A propeptide spanning residues 22-27 (SRPMPL) is cleaved from the precursor. 7 cysteine pairs are disulfide-bonded: C38/C98, C53/C145, C55/C71, C70/C126, C77/C119, C87/C112, and C105/C117. Residues Y54, G56, and G58 each coordinate Ca(2+). The active site involves H74. D75 serves as a coordination point for Ca(2+). D120 is a catalytic residue.

The protein belongs to the phospholipase A2 family. Group I subfamily. D49 sub-subfamily. The cofactor is Ca(2+). In terms of tissue distribution, expressed by the venom gland.

It localises to the secreted. It catalyses the reaction a 1,2-diacyl-sn-glycero-3-phosphocholine + H2O = a 1-acyl-sn-glycero-3-phosphocholine + a fatty acid + H(+). Its function is as follows. PLA2 catalyzes the calcium-dependent hydrolysis of the 2-acyl groups in 3-sn-phosphoglycerides. The sequence is that of Acidic phospholipase A2 2 from Naja atra (Chinese cobra).